The primary structure comprises 130 residues: ATP synthase epsilon chain (130 aa).

This sequence belongs to the ATPase epsilon chain family. F-type ATPases have 2 components, CF(1) - the catalytic core - and CF(0) - the membrane proton channel. CF(1) has five subunits: alpha(3), beta(3), gamma(1), delta(1), epsilon(1). CF(0) has three main subunits: a, b and c.

The protein localises to the cell inner membrane. Functionally, produces ATP from ADP in the presence of a proton gradient across the membrane. The sequence is that of ATP synthase epsilon chain (atpC) from Fuscovulum blasticum (Rhodobacter blasticus).